An 89-amino-acid chain; its full sequence is MTLDTAEKQKLIESHQVHPTDTGSVEIQVAMISERITKLSEHLQGNIHDYASRQGLLKMIGKRKRLLSYIKGKDPKNYQDLIKKIGIRG.

It belongs to the universal ribosomal protein uS15 family. As to quaternary structure, part of the 30S ribosomal subunit. Forms a bridge to the 50S subunit in the 70S ribosome, contacting the 23S rRNA.

Its function is as follows. One of the primary rRNA binding proteins, it binds directly to 16S rRNA where it helps nucleate assembly of the platform of the 30S subunit by binding and bridging several RNA helices of the 16S rRNA. Functionally, forms an intersubunit bridge (bridge B4) with the 23S rRNA of the 50S subunit in the ribosome. The protein is Small ribosomal subunit protein uS15 of Prochlorococcus marinus (strain MIT 9515).